The chain runs to 88 residues: Sec-independent protein translocase protein TatA (88 aa).

The helical transmembrane segment at 1 to 21 (MNLGPTEILLILVIVVLLFGA) threads the bilayer. Residues 46-56 (SNDDQRYEEQQ) show a composition bias toward basic and acidic residues. The segment at 46–88 (SNDDQRYEEQQQQRQIAAQAQQQVVNPVEIPQPQPTDIQRPQQ) is disordered. Positions 57–68 (QQRQIAAQAQQQ) are enriched in low complexity.

The protein belongs to the TatA/E family. In terms of assembly, the Tat system comprises two distinct complexes: a TatABC complex, containing multiple copies of TatA, TatB and TatC subunits, and a separate TatA complex, containing only TatA subunits. Substrates initially bind to the TatABC complex, which probably triggers association of the separate TatA complex to form the active translocon.

Its subcellular location is the cell membrane. Functionally, part of the twin-arginine translocation (Tat) system that transports large folded proteins containing a characteristic twin-arginine motif in their signal peptide across membranes. TatA could form the protein-conducting channel of the Tat system. The polypeptide is Sec-independent protein translocase protein TatA (Corynebacterium diphtheriae (strain ATCC 700971 / NCTC 13129 / Biotype gravis)).